A 505-amino-acid chain; its full sequence is Sodium-coupled neutral amino acid transporter 3 (505 aa).

The interval 27-48 (VPTTDTQRTEDTQHCGEGKGFL) is disordered. Basic and acidic residues predominate over residues 33 to 43 (QRTEDTQHCGE). Asn73 is a glycosylation site (N-linked (GlcNAc...) asparagine). The next 5 membrane-spanning stretches (helical) occupy residues 82-102 (GILGLAYAMANTGIILFLFLL), 105-125 (VALLSSYSIHLLLKSSGIVGI), 143-163 (AAALAITLQNIGAMSSYLYII), 186-206 (MDGNYLVILVSVTIILPLALM), and 212-232 (LGYSSGFSLSCMVFFLIAVIY). Cys239 and Cys276 are disulfide-bonded. N-linked (GlcNAc...) asparagine glycans are attached at residues Asn247 and Asn251. Residues 288–308 (AYTIPIMAFAFVCHPEVLPIY) traverse the membrane as a helical segment. An N-linked (GlcNAc...) asparagine glycan is attached at Asn324. The next 5 helical transmembrane spans lie at 325–345 (LSIAVMYVMYFLAALFGYLTF), 367–387 (ILCVRVAVLIAVTLTVPIVLF), 409–429 (VLIATGLLTCINLLVIFAPNI), 432–452 (IFGIIGATSAPCLIFIFPAIF), and 472–492 (ALCFAAVGFLLMTMSLSFIII).

It belongs to the amino acid/polyamine transporter 2 family. As to expression, expressed predominantly in liver, moderately expressed in kidney and brain, and barely detectable in heart and muscle. Within liver, expressed in hepatocytes. Not detected in testis. Expressed in cells of the ganglion cell layer, in soma of some cells of the inner nuclear layer (at protein level). Expressed in the inner segments of photoreceptor cells.

It localises to the cell membrane. Its subcellular location is the basolateral cell membrane. The catalysed reaction is L-histidine(out) + Na(+)(out) + H(+)(in) = L-histidine(in) + Na(+)(in) + H(+)(out). The enzyme catalyses L-glutamine(out) + Na(+)(out) + H(+)(in) = L-glutamine(in) + Na(+)(in) + H(+)(out). It catalyses the reaction L-asparagine(out) + Na(+)(out) + H(+)(in) = L-asparagine(in) + Na(+)(in) + H(+)(out). Its function is as follows. Symporter that cotransports specific neutral amino acids and sodium ions, coupled to an H(+) antiporter activity. Mainly participates in the glutamate-GABA-glutamine cycle in brain where it transports L-glutamine from astrocytes in the intercellular space for the replenishment of both neurotransmitters glutamate and gamma-aminobutyric acid (GABA) in neurons and also functions as the major influx transporter in ganglion cells mediating the uptake of glutamine. The transport activity is specific for L-glutamine, L-histidine and L-asparagine. The transport is electroneutral coupled to the cotransport of 1 Na(+) and the antiport of 1 H(+). The transport is pH dependent, saturable, Li(+) tolerant and functions in both direction depending on the concentration gradients of its substrates and cotransported ions. Also mediates an amino acid-gated H(+) conductance that is not stoichiometrically coupled to the amino acid transport but which influences the ionic gradients that drive the amino acid transport. In addition, may play a role in nitrogen metabolism, amino acid homeostasis, glucose metabolism and renal ammoniagenesis. The polypeptide is Sodium-coupled neutral amino acid transporter 3 (Mus musculus (Mouse)).